Consider the following 126-residue polypeptide: Tachykinin-3 (126 aa).

A signal peptide spans 1 to 20 (MRSTLLFAVILALSSARSLG). Positions 21–83 (AVCEESQEQV…VGPKESPLPQ (63 aa)) are excised as a propeptide. At M95 the chain carries Methionine amide. The propeptide occupies 99 to 126 (NLQPDTPVDINQENIPSFGTFKYPPSVE). The interval 102-126 (PDTPVDINQENIPSFGTFKYPPSVE) is disordered.

This sequence belongs to the tachykinin family.

It localises to the secreted. Tachykinins are active peptides which excite neurons, evoke behavioral responses, are potent vasodilators and secretagogues, and contract (directly or indirectly) many smooth muscles. Is a critical central regulator of gonadal function. The protein is Tachykinin-3 (TAC3) of Bos taurus (Bovine).